An 81-amino-acid chain; its full sequence is Small ribosomal subunit protein bS16 (81 aa).

The protein belongs to the bacterial ribosomal protein bS16 family.

This is Small ribosomal subunit protein bS16 from Neisseria gonorrhoeae (strain ATCC 700825 / FA 1090).